We begin with the raw amino-acid sequence, 1359 residues long: DNA-directed RNA polymerase subunit beta (1359 aa).

It belongs to the RNA polymerase beta chain family. As to quaternary structure, the RNAP catalytic core consists of 2 alpha, 1 beta, 1 beta' and 1 omega subunit. When a sigma factor is associated with the core the holoenzyme is formed, which can initiate transcription.

It catalyses the reaction RNA(n) + a ribonucleoside 5'-triphosphate = RNA(n+1) + diphosphate. Its function is as follows. DNA-dependent RNA polymerase catalyzes the transcription of DNA into RNA using the four ribonucleoside triphosphates as substrates. This Nitrosomonas eutropha (strain DSM 101675 / C91 / Nm57) protein is DNA-directed RNA polymerase subunit beta.